The primary structure comprises 509 residues: Otolin-1 (509 aa).

The N-terminal stretch at M1–A25 is a signal peptide. Residues S23 to T96 form a disordered region. Residues R42 to D54 show a composition bias toward gly residues. Over residues R62–G75 the composition is skewed to polar residues. N-linked (GlcNAc...) asparagine glycosylation is present at N121. One can recognise a Collagen-like 1 domain in the interval G193 to G244. Positions G202–A372 are disordered. The segment covering E213–E227 has biased composition (basic and acidic residues). N-linked (GlcNAc...) asparagine glycans are attached at residues N246 and N311. Positions G285 to P329 constitute a Collagen-like 2 domain. Positions R302–L322 are enriched in low complexity. Over residues G327 to G342 the composition is skewed to gly residues. The 138-residue stretch at A372–A509 folds into the C1q domain. N-linked (GlcNAc...) asparagine glycosylation occurs at N417.

The protein belongs to the OTOL1 family. Homooligomer; disulfide-linked; probably forms homotrimers. Interacts with otomp.

The protein resides in the secreted. Its subcellular location is the extracellular space. It is found in the extracellular matrix. In terms of biological role, collagen-like protein, which provides an organic scaffold for otoliths onto the sensory epithelium of the inner ear. Acts as a scaffold for biomineralization by sequestering calcium. The protein is Otolin-1 (Otol1) of Oncorhynchus mykiss (Rainbow trout).